A 305-amino-acid polypeptide reads, in one-letter code: MWSLRLHPSPFGAACQGIFTSTSLLFLVTVPLVCTIVYDSCLYMDVNASRALANVYDLPDDFFPQIDDLVRDAKDALEPYWKAETIKKHVLIATHFVDLIEDFWQTTQGMSQIADALRAVIPPTTVPVPEGFLITHSEAEEIPLNDLFSNQEERIVNFQPDYPITARIHTHLRVYTKLNEQALDKARRLLWWHYNCLLWGEATVTNYISRLRTWLSTPEKYRGKDAPTIEAITRPIQVAQGGRNQTKGTRKPRGLEPRRRKVKTTVVYGRRRSKSRGRRSSPSQRAGSPLPRNRGNQTRSPSPRE.

The N-terminal stretch at 1–19 (MWSLRLHPSPFGAACQGIF) is a signal peptide. The interval 226–305 (APTIEAITRP…NQTRSPSPRE (80 aa)) is disordered. The span at 248-279 (GTRKPRGLEPRRRKVKTTVVYGRRRSKSRGRR) shows a compositional bias: basic residues. The propeptide occupies 273–305 (SKSRGRRSSPSQRAGSPLPRNRGNQTRSPSPRE). The segment covering 294–305 (RGNQTRSPSPRE) has biased composition (polar residues).

Belongs to the avihepadnavirus precore antigen family. In terms of assembly, homodimerizes.

It localises to the secreted. In terms of biological role, may regulate immune response to the intracellular capsid in acting as a T-cell tolerogen, by having an immunoregulatory effect which prevents destruction of infected cells by cytotoxic T-cells. This Heron hepatitis B virus (HHBV) protein is External core antigen (C).